The primary structure comprises 438 residues: Trigger factor (438 aa).

A PPIase FKBP-type domain is found at 160–245 (DDKVTIDFVG…VKKIQQAELP (86 aa)).

It belongs to the FKBP-type PPIase family. Tig subfamily.

The protein resides in the cytoplasm. It catalyses the reaction [protein]-peptidylproline (omega=180) = [protein]-peptidylproline (omega=0). Functionally, involved in protein export. Acts as a chaperone by maintaining the newly synthesized protein in an open conformation. Functions as a peptidyl-prolyl cis-trans isomerase. In Francisella tularensis subsp. holarctica (strain OSU18), this protein is Trigger factor.